Consider the following 476-residue polypeptide: MDEAWERAVEAALQAAGEGSSSPARSLTLDGAVKCLHGRLPAAEILERYQSLEHLSIAGVGVASLAGFPRLRNLTRLTLSDNRIAGGLDHLVAAGLASLRDLDLSNNRIQDVGDLSPLANLRLVSLDLYECPVTRVKDYRSKVFGMIRTLKYLDKMDADENERPESDDDDDDGDGDGDGEEEEDDDDDEDEDPGSGEVANGGVSHPRGGVASHPVEVNGVIDVDEDESDADEVVPNGGDEHHANGFRVAAVGDEDEYVEEEDDDDEEDYEEEDDLGEEIDEDGDDEDAVVEVHDVPSSSDEEEDGIEEEDEEEDEDEEEVEDDGEEAEPESSGRVALAVGDVGEEIDGHEHGEGEDEDENGEIGEEDEERLEDDRVYEEGNDDDEEDVDDEDEDTEYLVQPIAQPQAMAVGNDFDAAEADDADEDRDEVDDDDDGGTDLPSSSQGAKRKRDDDPSGSGDDDEDDDGVEDLRPFKHH.

3 LRR repeats span residues 51-72 (SLEH…PRLR), 73-92 (NLTR…DHLV), and 98-119 (SLRD…SPLA). The 39-residue stretch at 131-169 (CPVTRVKDYRSKVFGMIRTLKYLDKMDADENERPESDDD) folds into the LRRCT domain. The interval 157 to 476 (DADENERPES…VEDLRPFKHH (320 aa)) is disordered. 8 stretches are compositionally biased toward acidic residues: residues 165 to 194 (ESDD…EDPG), 222 to 232 (DVDEDESDADE), 252 to 289 (GDED…EDAV), 299 to 329 (SDEE…EAEP), 353 to 371 (EGED…EERL), 379 to 396 (EGND…EDTE), 415 to 436 (DAAE…DDGG), and 458 to 467 (GDDDEDDDGV).

This sequence belongs to the ANP32 family.

The protein is Acidic leucine-rich nuclear phosphoprotein 32-related protein 1 of Oryza sativa subsp. japonica (Rice).